We begin with the raw amino-acid sequence, 463 residues long: MKSFDEMTPKEIVQELDKYIVGQYEAKKAVAIAVRNRIRRQKLPEEWRKEVLPKNILMIGPTGVGKTEIARRLAQLSGSPFLKVEATRFTEVGYVGKNVDSMIRDLVEISVNMVKQEKIKEVERQAEELVEERILDALVPESKAVPVVTNPFINLITGGQQQQYTPEDRRRFRAKREEMREKLRKGELENEEIEIELEETVSPFMGIFGPGMEDLGIEITNMFSGMLPKQKKKRKMKVSEARKVLLPLEAEKLIDMDKVVQEALDRAQNRGIIFIDEIDKIAGKESAVGPDVSRQGVQRDLLPIVEGTTIMTKYGPVRTDYILFIAAGAFHVSRPSDLIPELQGRFPIRVELSPLTEEDFVRILKEPENAIIKQYQALLSTEGVELVFTEDGIREMARIAYQLNQRLENIGARRLYTVAEKVLEEISFEAPDIPEKRIVVDAEYVRRRLERIVQDEDLSAYIL.

ATP is bound by residues valine 21, 63–68 (GVGKTE), aspartate 276, glutamate 341, and arginine 413.

This sequence belongs to the ClpX chaperone family. HslU subfamily. A double ring-shaped homohexamer of HslV is capped on each side by a ring-shaped HslU homohexamer. The assembly of the HslU/HslV complex is dependent on binding of ATP.

The protein resides in the cytoplasm. ATPase subunit of a proteasome-like degradation complex; this subunit has chaperone activity. The binding of ATP and its subsequent hydrolysis by HslU are essential for unfolding of protein substrates subsequently hydrolyzed by HslV. HslU recognizes the N-terminal part of its protein substrates and unfolds these before they are guided to HslV for hydrolysis. The sequence is that of ATP-dependent protease ATPase subunit HslU from Thermotoga sp. (strain RQ2).